A 79-amino-acid chain; its full sequence is Small ribosomal subunit protein bS16cz (79 aa).

It belongs to the bacterial ribosomal protein bS16 family.

Its subcellular location is the plastid. It is found in the chloroplast. The sequence is that of Small ribosomal subunit protein bS16cz from Arabidopsis thaliana (Mouse-ear cress).